Here is a 487-residue protein sequence, read N- to C-terminus: MTKEQKLQLAEIRTMIPEMRRVECIHFVGIGGAGMSGIAEVLLNEGYHISGSDMAENTVTVRLAQKGAEIFFGHQASNVAKASVVVVSTAIDPSNPEIVAAKENRIPVIRRAEMLAELMRYRHGIAVAGTHGKTTTTALTTQIYSEAGLDPTFVNGGLVKNAGTNARLGSSRFLIAEADESDASFLHLQPMVSIVTNIEADHMDTYGGDFETLKQTFIDFLHNLPFYGQAVMCVDDPVVRELLPQVSRQVITYGFSDDADVRLINYRQVGQQSFFTVQRKDRTDLDIVLNIPGKHNALNATAAIAVATEEDVEDEAILTALLNFEGAGRRFDQLGEFETGNGSAMLVDDYGHHPTEVDVTIKAARAGWAEKRLVMIFQPHRYSRTRDLYDDFANVLDNVDVLIMLDVYSAGETPIAGADGRALCRTIRGRGKIDPVFVPTIEALPPVLANIIQEGDLILTQGAGDVGKLAKQLASMELNIETMKKLG.

129 to 135 (GTHGKTT) is a binding site for ATP.

The protein belongs to the MurCDEF family.

Its subcellular location is the cytoplasm. It catalyses the reaction UDP-N-acetyl-alpha-D-muramate + L-alanine + ATP = UDP-N-acetyl-alpha-D-muramoyl-L-alanine + ADP + phosphate + H(+). Its pathway is cell wall biogenesis; peptidoglycan biosynthesis. Cell wall formation. This Aliivibrio fischeri (strain ATCC 700601 / ES114) (Vibrio fischeri) protein is UDP-N-acetylmuramate--L-alanine ligase.